We begin with the raw amino-acid sequence, 356 residues long: Heat-inducible transcription repressor HrcA (356 aa).

Belongs to the HrcA family.

Functionally, negative regulator of class I heat shock genes (grpE-dnaK-dnaJ and groELS operons). Prevents heat-shock induction of these operons. In Chlorobaculum parvum (strain DSM 263 / NCIMB 8327) (Chlorobium vibrioforme subsp. thiosulfatophilum), this protein is Heat-inducible transcription repressor HrcA.